We begin with the raw amino-acid sequence, 105 residues long: Small ribosomal subunit protein uS10c (105 aa).

Belongs to the universal ribosomal protein uS10 family. As to quaternary structure, part of the 30S ribosomal subunit.

The protein resides in the plastid. It localises to the cyanelle. Functionally, involved in the binding of tRNA to the ribosomes. The sequence is that of Small ribosomal subunit protein uS10c (rps10) from Cyanophora paradoxa.